The chain runs to 151 residues: 3-dehydroquinate dehydratase (151 aa).

Tyr-24 acts as the Proton acceptor in catalysis. Substrate contacts are provided by Asn-76, His-82, and Asp-89. His-102 functions as the Proton donor in the catalytic mechanism. Substrate contacts are provided by residues 103–104 (VS) and Arg-113.

Belongs to the type-II 3-dehydroquinase family. Homododecamer.

The enzyme catalyses 3-dehydroquinate = 3-dehydroshikimate + H2O. The protein operates within metabolic intermediate biosynthesis; chorismate biosynthesis; chorismate from D-erythrose 4-phosphate and phosphoenolpyruvate: step 3/7. Catalyzes a trans-dehydration via an enolate intermediate. This chain is 3-dehydroquinate dehydratase, found in Rhodopseudomonas palustris (strain BisA53).